Here is a 423-residue protein sequence, read N- to C-terminus: Testican-2 (423 aa).

The signal sequence occupies residues 1-22; it reads MRAPGSGRLALPLLLLAVVALA. Ser-72 bears the Phosphoserine mark. Disulfide bonds link Cys-90–Cys-101, Cys-95–Cys-111, Cys-136–Cys-166, Cys-139–Cys-159, and Cys-148–Cys-180. In terms of domain architecture, Kazal-like spans 130-182; it reads GGKDSVCKPCHMAQLASVCGSDGHTYSSVCKLEQQACLSSKQLAVRCEGPCPC. Asn-225 carries N-linked (GlcNAc...) asparagine glycosylation. The Thyroglobulin type-1 domain occupies 309–375; sequence KPPCLAELER…GTRMHGTPDC (67 aa). 3 cysteine pairs are disulfide-bonded: Cys-312/Cys-336, Cys-347/Cys-354, and Cys-356/Cys-375. Residues Ser-382 and Ser-387 are each glycosylated (O-linked (Xyl...) (glycosaminoglycan) serine). The tract at residues 387-423 is disordered; it reads SGVGWEDEEEKETEEAGEEAEEEEGEAGEADDGGYIW. Acidic residues predominate over residues 391–423; that stretch reads WEDEEEKETEEAGEEAEEEEGEAGEADDGGYIW.

In terms of processing, O-glycosylated; contains chondroitin sulfate and heparan sulfate. In terms of tissue distribution, brain specific.

The protein localises to the secreted. It is found in the extracellular space. Its subcellular location is the extracellular matrix. Its function is as follows. May participate in diverse steps of neurogenesis. Binds calcium. The protein is Testican-2 (Spock2) of Mus musculus (Mouse).